A 223-amino-acid chain; its full sequence is UPF0441 protein YgiB (223 aa).

A compositionally biased stretch (low complexity) spans 178–195; that stretch reads TVPKTAMAPKPATTTTVT. The interval 178-223 is disordered; that stretch reads TVPKTAMAPKPATTTTVTRGGFGESVAKQSTMQRSAAGTSTRSMGG. The segment covering 204–223 has biased composition (polar residues); it reads AKQSTMQRSAAGTSTRSMGG.

This sequence belongs to the UPF0441 family.

This chain is UPF0441 protein YgiB, found in Salmonella heidelberg (strain SL476).